The following is an 85-amino-acid chain: Small ribosomal subunit protein uS17 (85 aa).

Belongs to the universal ribosomal protein uS17 family. In terms of assembly, part of the 30S ribosomal subunit.

Functionally, one of the primary rRNA binding proteins, it binds specifically to the 5'-end of 16S ribosomal RNA. The polypeptide is Small ribosomal subunit protein uS17 (Rhodospirillum centenum (strain ATCC 51521 / SW)).